A 636-amino-acid chain; its full sequence is Threonine--tRNA ligase (636 aa).

In terms of domain architecture, TGS spans 1-60; the sequence is MPIINFNNKEILFNYPISIIEIIKKFDKNLSENCIAAKINGKLLDVSEIINYDGSLELVK. Residues 242-533 form a catalytic region; it reads DHRKIGKKLD…ITEEFSGKYP (292 aa). Zn(2+)-binding residues include cysteine 333, histidine 384, and histidine 510.

This sequence belongs to the class-II aminoacyl-tRNA synthetase family. In terms of assembly, homodimer. Zn(2+) is required as a cofactor.

It is found in the cytoplasm. The catalysed reaction is tRNA(Thr) + L-threonine + ATP = L-threonyl-tRNA(Thr) + AMP + diphosphate + H(+). Functionally, catalyzes the attachment of threonine to tRNA(Thr) in a two-step reaction: L-threonine is first activated by ATP to form Thr-AMP and then transferred to the acceptor end of tRNA(Thr). Also edits incorrectly charged L-seryl-tRNA(Thr). This Wigglesworthia glossinidia brevipalpis protein is Threonine--tRNA ligase.